The sequence spans 242 residues: Ribosomal RNA large subunit methyltransferase E (242 aa).

Residues Gly-64, Trp-66, Asp-84, Asp-100, and Asp-125 each coordinate S-adenosyl-L-methionine. Residue Lys-165 is the Proton acceptor of the active site. The disordered stretch occupies residues 198 to 242 (SSETFLLGRGLKKASPNGLDSRSGTAAEPAPLVPIGTNSMPANGD). The segment covering 233-242 (GTNSMPANGD) has biased composition (polar residues).

It belongs to the class I-like SAM-binding methyltransferase superfamily. RNA methyltransferase RlmE family.

It is found in the cytoplasm. The enzyme catalyses uridine(2552) in 23S rRNA + S-adenosyl-L-methionine = 2'-O-methyluridine(2552) in 23S rRNA + S-adenosyl-L-homocysteine + H(+). Specifically methylates the uridine in position 2552 of 23S rRNA at the 2'-O position of the ribose in the fully assembled 50S ribosomal subunit. The chain is Ribosomal RNA large subunit methyltransferase E from Verminephrobacter eiseniae (strain EF01-2).